A 437-amino-acid polypeptide reads, in one-letter code: Transcription factor AP-2-alpha (437 aa).

A Glycyl lysine isopeptide (Lys-Gly) (interchain with G-Cter in SUMO); alternate cross-link involves residue lysine 10. Lysine 10 participates in a covalent cross-link: Glycyl lysine isopeptide (Lys-Gly) (interchain with G-Cter in SUMO2); alternate. Residues 14 to 107 are disordered; sequence CEDRHDGASN…GQRQSQESGL (94 aa). A PPxY motif motif is present at residues 57–62; it reads YFPPPY. 2 stretches are compositionally biased toward low complexity: residues 65 to 74 and 88 to 101; these read IYPQSQDPYS and QPQPQHPGWPGQRQ. Residues lysine 177 and lysine 184 each participate in a glycyl lysine isopeptide (Lys-Gly) (interchain with G-Cter in SUMO2) cross-link. Residue serine 239 is modified to Phosphoserine; by PKA. An H-S-H (helix-span-helix), dimerization region spans residues 280-410; the sequence is RRKAANVTLL…YLTEALKAMD (131 aa). Over residues 414 to 427 the composition is skewed to polar residues; that stretch reads LSNNPNSHTDNNAK. Residues 414 to 437 form a disordered region; that stretch reads LSNNPNSHTDNNAKSSDKEEKHRK. Over residues 428-437 the composition is skewed to basic and acidic residues; the sequence is SSDKEEKHRK.

The protein belongs to the AP-2 family. As to quaternary structure, binds DNA as a dimer. Can form homodimers or heterodimers with other AP-2 family members. Interacts with WWOX. Interacts with CITED4. Interacts with UBE2I. Interacts with RALBP1 in a complex also containing EPN1 and NUMB during interphase and mitosis. Interacts with KCTD1; this interaction represses transcription activation. Interacts (via C-terminus) with CITED2 (via C-terminus); the interaction stimulates TFAP2A-transcriptional activation. Interacts (via N-terminus) with EP300 (via N-terminus); the interaction requires CITED2. Interacts with KCTD15; this interaction inhibits TFAP2A transcriptional activation. In terms of processing, sumoylated on Lys-10; which inhibits transcriptional activity.

The protein resides in the nucleus. Sequence-specific DNA-binding protein that interacts with inducible viral and cellular enhancer elements to regulate transcription of selected genes. AP-2 factors bind to the consensus sequence 5'-GCCNNNGGC-3' and activate genes involved in a large spectrum of important biological functions including proper eye, face, body wall, limb and neural tube development. They also suppress a number of genes including MCAM/MUC18, C/EBP alpha and MYC. AP-2-alpha is the only AP-2 protein required for early morphogenesis of the lens vesicle. Together with the CITED2 coactivator, stimulates the PITX2 P1 promoter transcription activation. Associates with chromatin to the PITX2 P1 promoter region. The protein is Transcription factor AP-2-alpha (TFAP2A) of Bos taurus (Bovine).